The following is a 669-amino-acid chain: Translation factor GUF1, mitochondrial (669 aa).

The transit peptide at 1 to 49 (MWTLVGRGWGCARALAPRATGAALLVAPGPRSAPTLGAAPESWATDRLY) directs the protein to the mitochondrion. A tr-type G domain is found at 66–247 (ENIRNFSIVA…AIIERIPPPK (182 aa)). GTP is bound by residues 75–82 (AHVDHGKS), 140–144 (DTPGH), and 194–197 (NKID).

This sequence belongs to the TRAFAC class translation factor GTPase superfamily. Classic translation factor GTPase family. LepA subfamily.

Its subcellular location is the mitochondrion inner membrane. The catalysed reaction is GTP + H2O = GDP + phosphate + H(+). Promotes mitochondrial protein synthesis. May act as a fidelity factor of the translation reaction, by catalyzing a one-codon backward translocation of tRNAs on improperly translocated ribosomes. Binds to mitochondrial ribosomes in a GTP-dependent manner. The protein is Translation factor GUF1, mitochondrial of Homo sapiens (Human).